A 132-amino-acid chain; its full sequence is Fatty acid-binding protein, intestinal (132 aa).

An N-acetylalanine modification is found at A2. Positions 83 and 107 each coordinate hexadecanoate. Tetradecanoate is bound by residues W83 and R107.

Belongs to the calycin superfamily. Fatty-acid binding protein (FABP) family.

The protein localises to the cytoplasm. FABPs are thought to play a role in the intracellular transport of long-chain fatty acids and their acyl-CoA esters. FABP2 is probably involved in triglyceride-rich lipoprotein synthesis. Binds saturated long-chain fatty acids with a high affinity, but binds with a lower affinity to unsaturated long-chain fatty acids. FABP2 may also help maintain energy homeostasis by functioning as a lipid sensor. The chain is Fatty acid-binding protein, intestinal (FABP2) from Sus scrofa (Pig).